We begin with the raw amino-acid sequence, 99 residues long: MEPQKLLIIGFLLCSLTCLLLETVASSPLPLSALGIQEKTGSKPRSGGNHRSWLNNFRDYLWQLIKSALPPAAIVAFLLTSALMGILCCFTILVVDPVH.

Residues 1–26 form the signal peptide; it reads MEPQKLLIIGFLLCSLTCLLLETVAS. At 27 to 73 the chain is on the extracellular side; the sequence is SPLPLSALGIQEKTGSKPRSGGNHRSWLNNFRDYLWQLIKSALPPAA. Residues 74–94 form a helical membrane-spanning segment; sequence IVAFLLTSALMGILCCFTILV. Over 95–99 the chain is Cytoplasmic; the sequence is VDPVH.

It is found in the cell membrane. The protein is Small integral membrane protein 9 (SMIM9) of Homo sapiens (Human).